A 154-amino-acid chain; its full sequence is Ubiquitin-conjugating enzyme E2 L3 (154 aa).

The 148-residue stretch at 2 to 149 (AASRRLMKEL…AEEFTKKYGE (148 aa)) folds into the UBC core domain. Residue Cys-86 is the Glycyl thioester intermediate of the active site. N6-acetyllysine is present on Lys-131.

Belongs to the ubiquitin-conjugating enzyme family. As to quaternary structure, interacts with PRKN; involved in ubiquitination and degradation of misfolded proteins. Interacts with UBE3A. Interacts with CCNB1IP1, CBL, ZAP70, RNF19A, RNF19B and RNF144B. Interacts with ARIH1. Interacts with ARIH2 (via RING-type 1). Interacts with NCOA1; they functionally interact to regulate progesterone receptor transcriptional activity. Interacts with NDFIP1 (via N-terminus); the interaction mediates recruitment of UBE2L3 to ITCH and causes MAP3K7 ubiquitination. Ubiquitinated. The alteration of UBE2L3 protein levels during the S-phase of the cell cycle is due to ubiquitin-dependent proteasomal degradation. Autoubiquitinated in vitro.

The protein localises to the nucleus. It is found in the cytoplasm. The enzyme catalyses S-ubiquitinyl-[E1 ubiquitin-activating enzyme]-L-cysteine + [E2 ubiquitin-conjugating enzyme]-L-cysteine = [E1 ubiquitin-activating enzyme]-L-cysteine + S-ubiquitinyl-[E2 ubiquitin-conjugating enzyme]-L-cysteine.. Its pathway is protein modification; protein ubiquitination. Ubiquitin-conjugating enzyme E2 that specifically acts with HECT-type and RBR family E3 ubiquitin-protein ligases. Does not function with most RING-containing E3 ubiquitin-protein ligases because it lacks intrinsic E3-independent reactivity with lysine: in contrast, it has activity with the RBR family E3 enzymes, such as PRKN, RNF31 and ARIH1, that function like RING-HECT hybrids. Accepts ubiquitin from the E1 complex and catalyzes its covalent attachment to other proteins. Mediates ubiquitination by the CUL9-RBX1 complex. In vitro catalyzes 'Lys-11'-linked polyubiquitination. Involved in the selective degradation of short-lived and abnormal proteins. Down-regulated during the S-phase it is involved in progression through the cell cycle. Regulates nuclear hormone receptors transcriptional activity. May play a role in myelopoiesis. The polypeptide is Ubiquitin-conjugating enzyme E2 L3 (UBE2L3) (Bos taurus (Bovine)).